Here is a 346-residue protein sequence, read N- to C-terminus: Thiamine-phosphate synthase (346 aa).

Positions 1-125 (MSVTPNPDQH…SKISAQIRYE (125 aa)) are unknown. Residues 126–346 (IYDLEVIILK…SKELLGKLKK (221 aa)) are thiamine-phosphate synthase. Residues 177–181 (QYRCK) and N209 contribute to the 4-amino-2-methyl-5-(diphosphooxymethyl)pyrimidine site. Mg(2+)-binding residues include D210 and D229. Residue S248 participates in 4-amino-2-methyl-5-(diphosphooxymethyl)pyrimidine binding. Residue 274 to 276 (TKS) coordinates 2-[(2R,5Z)-2-carboxy-4-methylthiazol-5(2H)-ylidene]ethyl phosphate. A 4-amino-2-methyl-5-(diphosphooxymethyl)pyrimidine-binding site is contributed by K277. Position 304 (G304) interacts with 2-[(2R,5Z)-2-carboxy-4-methylthiazol-5(2H)-ylidene]ethyl phosphate.

It belongs to the thiamine-phosphate synthase family. The cofactor is Mg(2+).

It catalyses the reaction 2-[(2R,5Z)-2-carboxy-4-methylthiazol-5(2H)-ylidene]ethyl phosphate + 4-amino-2-methyl-5-(diphosphooxymethyl)pyrimidine + 2 H(+) = thiamine phosphate + CO2 + diphosphate. The catalysed reaction is 2-(2-carboxy-4-methylthiazol-5-yl)ethyl phosphate + 4-amino-2-methyl-5-(diphosphooxymethyl)pyrimidine + 2 H(+) = thiamine phosphate + CO2 + diphosphate. The enzyme catalyses 4-methyl-5-(2-phosphooxyethyl)-thiazole + 4-amino-2-methyl-5-(diphosphooxymethyl)pyrimidine + H(+) = thiamine phosphate + diphosphate. It participates in cofactor biosynthesis; thiamine diphosphate biosynthesis; thiamine phosphate from 4-amino-2-methyl-5-diphosphomethylpyrimidine and 4-methyl-5-(2-phosphoethyl)-thiazole: step 1/1. Its function is as follows. Condenses 4-methyl-5-(beta-hydroxyethyl)thiazole monophosphate (THZ-P) and 2-methyl-4-amino-5-hydroxymethyl pyrimidine pyrophosphate (HMP-PP) to form thiamine monophosphate (TMP). The polypeptide is Thiamine-phosphate synthase (Prochlorococcus marinus (strain SARG / CCMP1375 / SS120)).